The sequence spans 91 residues: UPF0213 protein NGO_1598 (91 aa).

Residues 4 to 83 (SNWSVYLILC…AAQKRQLWEQ (80 aa)) form the GIY-YIG domain.

Belongs to the UPF0213 family.

In Neisseria gonorrhoeae (strain ATCC 700825 / FA 1090), this protein is UPF0213 protein NGO_1598.